A 149-amino-acid chain; its full sequence is Transcriptional repressor NrdR (149 aa).

Residues 3 to 34 fold into a zinc finger; sequence CPFCGTQDTKVIDSRLVADGASVRRRRECNHC. Positions 49–139 constitute an ATP-cone domain; the sequence is PRVIKTDGSR…VYRSFEDIRE (91 aa).

Belongs to the NrdR family. Zn(2+) serves as cofactor.

Its function is as follows. Negatively regulates transcription of bacterial ribonucleotide reductase nrd genes and operons by binding to NrdR-boxes. The polypeptide is Transcriptional repressor NrdR (Idiomarina loihiensis (strain ATCC BAA-735 / DSM 15497 / L2-TR)).